Reading from the N-terminus, the 417-residue chain is Creatine kinase U-type, mitochondrial (417 aa).

The transit peptide at 1–39 (MAGPFSRLLSARPGLRLLALAGAGSLAAGFLLRPEPVRA) directs the protein to the mitochondrion. A cardiolipin-binding region spans residues 40–64 (ASERRRLYPPSAEYPDLRKHNNCMA). Residues 45–131 (RLYPPSAEYP…FDPVIQERHN (87 aa)) form the Phosphagen kinase N-terminal domain. Position 151 is a phosphoserine (Ser-151). In terms of domain architecture, Phosphagen kinase C-terminal spans 158–400 (YVLSSRVRTG…NYLIDCERRL (243 aa)). 161–165 (SSRVR) is a binding site for ATP. Phosphoserine is present on Ser-196. Thr-213 is subject to Phosphothreonine. His-224 is a binding site for ATP. The residue at position 232 (Ser-232) is a Phosphoserine. Residues Arg-269, Arg-325, 353–358 (RGTGGV), and Asp-368 contribute to the ATP site. The residue at position 355 (Thr-355) is a Phosphothreonine.

This sequence belongs to the ATP:guanido phosphotransferase family. In terms of assembly, exists as an octamer composed of four MTCK homodimers.

It is found in the mitochondrion inner membrane. The enzyme catalyses creatine + ATP = N-phosphocreatine + ADP + H(+). In terms of biological role, reversibly catalyzes the transfer of phosphate between ATP and various phosphogens (e.g. creatine phosphate). Creatine kinase isoenzymes play a central role in energy transduction in tissues with large, fluctuating energy demands, such as skeletal muscle, heart, brain and spermatozoa. This chain is Creatine kinase U-type, mitochondrial (CKMT1A), found in Homo sapiens (Human).